A 381-amino-acid chain; its full sequence is Succinyl-diaminopimelate desuccinylase (381 aa).

Histidine 69 serves as a coordination point for Zn(2+). Residue aspartate 71 is part of the active site. A Zn(2+)-binding site is contributed by aspartate 103. Glutamate 137 serves as the catalytic Proton acceptor. Glutamate 138, glutamate 166, and histidine 355 together coordinate Zn(2+).

Belongs to the peptidase M20A family. DapE subfamily. As to quaternary structure, homodimer. Zn(2+) is required as a cofactor. Co(2+) serves as cofactor.

The catalysed reaction is N-succinyl-(2S,6S)-2,6-diaminopimelate + H2O = (2S,6S)-2,6-diaminopimelate + succinate. Its pathway is amino-acid biosynthesis; L-lysine biosynthesis via DAP pathway; LL-2,6-diaminopimelate from (S)-tetrahydrodipicolinate (succinylase route): step 3/3. Catalyzes the hydrolysis of N-succinyl-L,L-diaminopimelic acid (SDAP), forming succinate and LL-2,6-diaminopimelate (DAP), an intermediate involved in the bacterial biosynthesis of lysine and meso-diaminopimelic acid, an essential component of bacterial cell walls. The protein is Succinyl-diaminopimelate desuccinylase of Rickettsia rickettsii (strain Iowa).